A 195-amino-acid polypeptide reads, in one-letter code: Flavin prenyltransferase UbiX (195 aa).

FMN-binding positions include 17 to 19 (GGS), serine 43, 94 to 97 (SAGT), and arginine 129. 2 residues coordinate dimethylallyl phosphate: tyrosine 159 and arginine 175.

The protein belongs to the UbiX/PAD1 family.

It catalyses the reaction dimethylallyl phosphate + FMNH2 = prenylated FMNH2 + phosphate. Flavin prenyltransferase that catalyzes the synthesis of the prenylated FMN cofactor (prenyl-FMN) for 4-hydroxy-3-polyprenylbenzoic acid decarboxylase UbiD. The prenyltransferase is metal-independent and links a dimethylallyl moiety from dimethylallyl monophosphate (DMAP) to the flavin N5 and C6 atoms of FMN. The polypeptide is Flavin prenyltransferase UbiX (Deinococcus radiodurans (strain ATCC 13939 / DSM 20539 / JCM 16871 / CCUG 27074 / LMG 4051 / NBRC 15346 / NCIMB 9279 / VKM B-1422 / R1)).